A 318-amino-acid chain; its full sequence is MATENKILILGPTGAIGRHIVWASIKAGNPTYALVRKTPGNVNKPKLITAANPETKEELIDNYQSLGVILLEGDINDHETLVKAIKQVDIVICAAGRLLIEDQVKIIKAIKEAGNVKKFFPSEFGLDVDRHEAVEPVRQVFEEKASIRRVIEAEGVPYTYLCCHAFTGYFLRNLAQLDTTDPPRDKVVILGDGNVKGAYVTEADVGTFTIRAANDPNTLNKAVHIRLPENYLTQNEVIALWEKKIGKTLEKTYVSEEQVLKDIQESSFPHNYLLALYHSQQIKGDAVYEIDPAKDIEASEAYPDVTYTTADEYLNQFV.

NADP(+) contacts are provided by residues 11–17 (GPTGAIG), arginine 36, and lysine 44. The active-site Proton acceptor is the lysine 144. An NADP(+)-binding site is contributed by arginine 148.

This sequence belongs to the NmrA-type oxidoreductase family. Isoflavone reductase subfamily.

It carries out the reaction (3R)-vestitone + NADP(+) = 2'-hydroxyformononetin + NADPH + 2 H(+). Its pathway is phytoalexin biosynthesis; pterocarpan phytoalexin biosynthesis. Reduces achiral isoflavones to chiral isoflavanones during the biosynthesis of chiral pterocarpan phytoalexins. The reduction product is a third isomer, which represents the penultimate intermediate in the synthesis of the phytoalexin (-)-medicarpin, the major phytoalexin in Alfalfa. The chain is Isoflavone reductase from Medicago sativa (Alfalfa).